Reading from the N-terminus, the 944-residue chain is Putative alpha,alpha-trehalose-phosphate synthase [UDP-forming] 106 kDa subunit (944 aa).

The segment covering 73–84 has biased composition (polar residues); that stretch reads TNAQSNIATPSP. Disordered regions lie at residues 73 to 113 and 129 to 166; these read TNAQ…NSLS and SKNDGTNLSLPPSRHQSPPPSSVLASQRHHRRHDSELE. Low complexity predominate over residues 101-113; the sequence is PSSDSPSLENSLS. Phosphoserine occurs at positions 141, 145, 149, 150, 163, and 177. The tract at residues 173 to 652 is glycosyltransferase; the sequence is SRSLSFSMNG…AVTFQSLIKE (480 aa). Threonine 189 is modified (phosphothreonine).

This sequence in the N-terminal section; belongs to the glycosyltransferase 20 family.

It catalyses the reaction D-glucose 6-phosphate + UDP-alpha-D-glucose = alpha,alpha-trehalose 6-phosphate + UDP + H(+). The polypeptide is Putative alpha,alpha-trehalose-phosphate synthase [UDP-forming] 106 kDa subunit (Schizosaccharomyces pombe (strain 972 / ATCC 24843) (Fission yeast)).